A 514-amino-acid polypeptide reads, in one-letter code: Peptide chain release factor 3 (514 aa).

Residues 8 to 268 (KKRRTFAIIS…TFLKFAPEPH (261 aa)) form the tr-type G domain. Residues 17–24 (SHPDAGKT), 85–89 (DTPGH), and 139–142 (NKLD) contribute to the GTP site.

The protein belongs to the TRAFAC class translation factor GTPase superfamily. Classic translation factor GTPase family. PrfC subfamily.

Its subcellular location is the cytoplasm. Its function is as follows. Increases the formation of ribosomal termination complexes and stimulates activities of RF-1 and RF-2. It binds guanine nucleotides and has strong preference for UGA stop codons. It may interact directly with the ribosome. The stimulation of RF-1 and RF-2 is significantly reduced by GTP and GDP, but not by GMP. This is Peptide chain release factor 3 from Streptococcus thermophilus (strain CNRZ 1066).